We begin with the raw amino-acid sequence, 254 residues long: Ditrans,polycis-undecaprenyl-diphosphate synthase ((2E,6E)-farnesyl-diphosphate specific) (254 aa).

Aspartate 25 is a catalytic residue. Aspartate 25 contacts Mg(2+). Substrate contacts are provided by residues glycine 26–arginine 29, tryptophan 30, arginine 38, histidine 42, and serine 70–glutamate 72. Asparagine 73 serves as the catalytic Proton acceptor. Residues tryptophan 74, arginine 76, and arginine 193 each coordinate substrate. Residue histidine 198 participates in Mg(2+) binding. Position 199–201 (arginine 199–serine 201) interacts with substrate. Glutamate 212 lines the Mg(2+) pocket.

Belongs to the UPP synthase family. Homodimer. Requires Mg(2+) as cofactor.

It carries out the reaction 8 isopentenyl diphosphate + (2E,6E)-farnesyl diphosphate = di-trans,octa-cis-undecaprenyl diphosphate + 8 diphosphate. In terms of biological role, catalyzes the sequential condensation of isopentenyl diphosphate (IPP) with (2E,6E)-farnesyl diphosphate (E,E-FPP) to yield (2Z,6Z,10Z,14Z,18Z,22Z,26Z,30Z,34E,38E)-undecaprenyl diphosphate (di-trans,octa-cis-UPP). UPP is the precursor of glycosyl carrier lipid in the biosynthesis of bacterial cell wall polysaccharide components such as peptidoglycan and lipopolysaccharide. This chain is Ditrans,polycis-undecaprenyl-diphosphate synthase ((2E,6E)-farnesyl-diphosphate specific), found in Photorhabdus laumondii subsp. laumondii (strain DSM 15139 / CIP 105565 / TT01) (Photorhabdus luminescens subsp. laumondii).